Reading from the N-terminus, the 131-residue chain is D-ribose pyranase (131 aa).

The Proton donor role is filled by His20. Substrate contacts are provided by residues Asp28, His98, and 120–122 (YSN).

This sequence belongs to the RbsD / FucU family. RbsD subfamily. Homodecamer.

It localises to the cytoplasm. It carries out the reaction beta-D-ribopyranose = beta-D-ribofuranose. It participates in carbohydrate metabolism; D-ribose degradation; D-ribose 5-phosphate from beta-D-ribopyranose: step 1/2. Its function is as follows. Catalyzes the interconversion of beta-pyran and beta-furan forms of D-ribose. In Lactiplantibacillus plantarum (strain ATCC BAA-793 / NCIMB 8826 / WCFS1) (Lactobacillus plantarum), this protein is D-ribose pyranase.